A 61-amino-acid polypeptide reads, in one-letter code: Small ribosomal subunit protein uS14 (61 aa).

Positions 24, 27, 40, and 43 each coordinate Zn(2+).

The protein belongs to the universal ribosomal protein uS14 family. Zinc-binding uS14 subfamily. As to quaternary structure, part of the 30S ribosomal subunit. Contacts proteins S3 and S10. The cofactor is Zn(2+).

Binds 16S rRNA, required for the assembly of 30S particles and may also be responsible for determining the conformation of the 16S rRNA at the A site. The protein is Small ribosomal subunit protein uS14 of Staphylococcus carnosus (strain TM300).